The primary structure comprises 206 residues: Glycerol-3-phosphate acyltransferase (206 aa).

Transmembrane regions (helical) follow at residues 14-34, 67-87, 91-111, 124-144, and 148-168; these read IALAAAVIGYLLGSIPFGLIL, ATLLLDALKASAAAWIVGYFL, AAIIAGFFAFIGHLFPVWIGF, LLGVAPIMVVLFAAVWLAVAV, and YSSLSALVAMLVIPVALLILG.

Belongs to the PlsY family. In terms of assembly, probably interacts with PlsX.

It localises to the cell inner membrane. The enzyme catalyses an acyl phosphate + sn-glycerol 3-phosphate = a 1-acyl-sn-glycero-3-phosphate + phosphate. Its pathway is lipid metabolism; phospholipid metabolism. In terms of biological role, catalyzes the transfer of an acyl group from acyl-phosphate (acyl-PO(4)) to glycerol-3-phosphate (G3P) to form lysophosphatidic acid (LPA). This enzyme utilizes acyl-phosphate as fatty acyl donor, but not acyl-CoA or acyl-ACP. This is Glycerol-3-phosphate acyltransferase from Rhizobium etli (strain ATCC 51251 / DSM 11541 / JCM 21823 / NBRC 15573 / CFN 42).